A 188-amino-acid polypeptide reads, in one-letter code: Elongation factor P (188 aa).

Position 34 is an N6-(3,6-diaminohexanoyl)-5-hydroxylysine (K34).

This sequence belongs to the elongation factor P family. May be beta-lysylated on the epsilon-amino group of Lys-34 by the combined action of EpmA and EpmB, and then hydroxylated on the C5 position of the same residue by EpmC (if this protein is present). Lysylation is critical for the stimulatory effect of EF-P on peptide-bond formation. The lysylation moiety may extend toward the peptidyltransferase center and stabilize the terminal 3-CCA end of the tRNA. Hydroxylation of the C5 position on Lys-34 may allow additional potential stabilizing hydrogen-bond interactions with the P-tRNA.

The protein localises to the cytoplasm. It functions in the pathway protein biosynthesis; polypeptide chain elongation. Functionally, involved in peptide bond synthesis. Alleviates ribosome stalling that occurs when 3 or more consecutive Pro residues or the sequence PPG is present in a protein, possibly by augmenting the peptidyl transferase activity of the ribosome. Modification of Lys-34 is required for alleviation. In Cronobacter sakazakii (strain ATCC BAA-894) (Enterobacter sakazakii), this protein is Elongation factor P.